We begin with the raw amino-acid sequence, 165 residues long: Transcription elongation factor GreA (165 aa).

Positions 55-78 (AAKEEQGKQELRVRQLTQLLESAK) form a coiled coil.

This sequence belongs to the GreA/GreB family.

In terms of biological role, necessary for efficient RNA polymerase transcription elongation past template-encoded arresting sites. The arresting sites in DNA have the property of trapping a certain fraction of elongating RNA polymerases that pass through, resulting in locked ternary complexes. Cleavage of the nascent transcript by cleavage factors such as GreA or GreB allows the resumption of elongation from the new 3'terminus. GreA releases sequences of 2 to 3 nucleotides. This Streptomyces coelicolor (strain ATCC BAA-471 / A3(2) / M145) protein is Transcription elongation factor GreA.